The primary structure comprises 147 residues: NADH-quinone oxidoreductase subunit A (147 aa).

3 consecutive transmembrane segments (helical) span residues 13-33 (LFSYAVAIVVLLAAMLGLGAV), 70-90 (YLVAMLFVIFDVESVFLFSWA), and 104-124 (VVVFVASLAAALAYVWRWGAL).

The protein belongs to the complex I subunit 3 family. As to quaternary structure, NDH-1 is composed of 14 different subunits. Subunits NuoA, H, J, K, L, M, N constitute the membrane sector of the complex.

Its subcellular location is the cell inner membrane. It carries out the reaction a quinone + NADH + 5 H(+)(in) = a quinol + NAD(+) + 4 H(+)(out). Functionally, NDH-1 shuttles electrons from NADH, via FMN and iron-sulfur (Fe-S) centers, to quinones in the respiratory chain. The immediate electron acceptor for the enzyme in this species is believed to be ubiquinone. Couples the redox reaction to proton translocation (for every two electrons transferred, four hydrogen ions are translocated across the cytoplasmic membrane), and thus conserves the redox energy in a proton gradient. This Gluconacetobacter diazotrophicus (strain ATCC 49037 / DSM 5601 / CCUG 37298 / CIP 103539 / LMG 7603 / PAl5) protein is NADH-quinone oxidoreductase subunit A.